The chain runs to 201 residues: Syndecan-2 (201 aa).

The signal sequence occupies residues 1–18 (MRRAWILLTLGLVACVSA). Residues 19-144 (ESRAELTSDK…HSDSLFKRTE (126 aa)) are Extracellular-facing. 3 O-linked (Xyl...) (glycosaminoglycan) serine glycosylation sites follow: Ser-41, Ser-55, and Ser-57. 2 disordered regions span residues 42-70 (GVYP…ELTT) and 90-130 (TLNI…DTNV). The span at 90 to 102 (TLNIQNKIPAQTK) shows a compositional bias: polar residues. Thr-101 carries O-linked (GalNAc...) threonine glycosylation. Residues 103-123 (SPEETDKEKVHLSDSERKMDP) are compositionally biased toward basic and acidic residues. Residue Ser-115 is modified to Phosphoserine; by FAM20C. Residues 145–169 (VLAAVIAGGVIGFLFAIFLILLLVY) traverse the membrane as a helical segment. Topologically, residues 170-201 (RMRKKDEGSYDLGERKPSSAAYQKAPTKEFYA) are cytoplasmic. The tract at residues 178-201 (SYDLGERKPSSAAYQKAPTKEFYA) is disordered. The residue at position 187 (Ser-187) is a Phosphoserine.

Belongs to the syndecan proteoglycan family. As to quaternary structure, interacts (via cytoplasmic domain) with SARM1. Forms a complex with SDCBP and PDCD6IP. In terms of processing, O-glycosylated with core 1 or possibly core 8 glycans. Contains heparan sulfate. Also contains chondroitin sulfate.

It localises to the membrane. Cell surface proteoglycan which regulates dendritic arbor morphogenesis. The polypeptide is Syndecan-2 (SDC2) (Homo sapiens (Human)).